We begin with the raw amino-acid sequence, 241 residues long: Beta-nerve growth factor (241 aa).

A signal peptide spans 1-18 (MSMLFYTLITAFLIGIQA). Residues 19-121 (EPHSESNVPA…PFNRTHRSKR (103 aa)) constitute a propeptide that is removed on maturation. Residues Asn69, Asn114, and Asn166 are each glycosylated (N-linked (GlcNAc...) asparagine). 3 disulfides stabilise this stretch: Cys136–Cys201, Cys179–Cys229, and Cys189–Cys231.

The protein belongs to the NGF-beta family. In terms of assembly, homodimer. The homodimer interacts with a single NTRK1 chain. The homodimer interacts with a single NGFR chain. The NGF dimer interacts with a single SORCS2 chain (via extracellular domain). The NGF precursor (proNGF) binds to a receptor complex formed by SORT1 and NGFR, which leads to NGF endocytosis. Both mature NGF and the immature NGF precursor (proNGF) interact with SORCS2 and with the heterodimer formed by SORCS2 and NGFR (via extracellular domains). The NGF precursor (proNGF) has much higher affinity for SORCS2 than mature NGF. The NGF precursor (proNGF) has much higher affinity for SORT1 than mature NGF. Interacts with ADAM10 in a divalent cation-dependent manner. Interacts with SORCS3.

It is found in the secreted. The protein localises to the endosome lumen. In terms of biological role, nerve growth factor is important for the development and maintenance of the sympathetic and sensory nervous systems. Extracellular ligand for the NTRK1 and NGFR receptors, activates cellular signaling cascades through those receptor tyrosine kinase to regulate neuronal proliferation, differentiation and survival. Inhibits metalloproteinase dependent proteolysis of platelet glycoprotein VI. The polypeptide is Beta-nerve growth factor (NGF) (Pongo pygmaeus (Bornean orangutan)).